The chain runs to 361 residues: Peptide chain release factor 1 (361 aa).

An N5-methylglutamine modification is found at Gln-235.

It belongs to the prokaryotic/mitochondrial release factor family. Post-translationally, methylated by PrmC. Methylation increases the termination efficiency of RF1.

It localises to the cytoplasm. Its function is as follows. Peptide chain release factor 1 directs the termination of translation in response to the peptide chain termination codons UAG and UAA. The sequence is that of Peptide chain release factor 1 from Buchnera aphidicola subsp. Schizaphis graminum (strain Sg).